Here is a 291-residue protein sequence, read N- to C-terminus: Exosome complex component RRP42 (291 aa).

At alanine 2 the chain carries N-acetylalanine. At lysine 116 the chain carries N6-acetyllysine. Serine 177 bears the Phosphoserine mark.

This sequence belongs to the RNase PH family. In terms of assembly, component of the RNA exosome core complex (Exo-9), composed of EXOSC1, EXOSC2, EXOSC3, EXOSC4, EXOSC5, EXOSC6, EXOSC7, EXOSC8 and EXOSC9; within the complex interacts with EXOSC2 and EXOSC4. The catalytically inactive RNA exosome core complex (Exo-9) associates with the catalytic subunit EXOSC10/RRP6. Exo-9 may associate with DIS3 to form the nucleolar exosome complex, or DIS3L to form the cytoplasmic exosome complex. Exo-9 is formed by a hexameric base ring consisting of the heterodimers EXOSC4-EXOSC9, EXOSC5-EXOSC8 and EXOSC6-EXOSC7, and a cap ring consisting of EXOSC1, EXOSC2 and EXOSC3. The RNA exosome complex associates with cofactors C1D/RRP47, MPHOSPH6/MPP6 and MTREX/MTR4. Interacts with ZC3HAV1. Interacts with DIS3; the interaction is direct.

Its subcellular location is the nucleus. The protein localises to the nucleolus. The protein resides in the cytoplasm. In terms of biological role, non-catalytic component of the RNA exosome complex which has 3'-&gt;5' exoribonuclease activity and participates in a multitude of cellular RNA processing and degradation events. In the nucleus, the RNA exosome complex is involved in proper maturation of stable RNA species such as rRNA, snRNA and snoRNA, in the elimination of RNA processing by-products and non-coding 'pervasive' transcripts, such as antisense RNA species and promoter-upstream transcripts (PROMPTs), and of mRNAs with processing defects, thereby limiting or excluding their export to the cytoplasm. The RNA exosome may be involved in Ig class switch recombination (CSR) and/or Ig variable region somatic hypermutation (SHM) by targeting AICDA deamination activity to transcribed dsDNA substrates. In the cytoplasm, the RNA exosome complex is involved in general mRNA turnover and specifically degrades inherently unstable mRNAs containing AU-rich elements (AREs) within their 3' untranslated regions, and in RNA surveillance pathways, preventing translation of aberrant mRNAs. It seems to be involved in degradation of histone mRNA. The catalytic inactive RNA exosome core complex of 9 subunits (Exo-9) is proposed to play a pivotal role in the binding and presentation of RNA for ribonucleolysis, and to serve as a scaffold for the association with catalytic subunits and accessory proteins or complexes. The protein is Exosome complex component RRP42 (EXOSC7) of Homo sapiens (Human).